The chain runs to 161 residues: Abscisic acid receptor PYL11 (161 aa).

Positions 3–154 (TSQKYHTCGS…NLKSLAKLSE (152 aa)) are START-like. Abscisate is bound by residues K39, 68 to 73 (AEFSRE), 95 to 101 (RLVNYRS), and E119. The short motif at 64-68 (SGLPA) is the Gate loop element. The Latch loop motif lies at 94-96 (HRL).

This sequence belongs to the PYR/PYL/RCAR abscisic acid intracellular receptor family. As to quaternary structure, homodimer. Binds ABA on one subunit only. Interacts with PP2Cs. Binds to CARs protein in an ABA-independent manner, both at the plasma membrane and in the nucleus. Interacts with I-2 and TOPP1.

It is found in the cytoplasm. Its subcellular location is the nucleus. The protein localises to the cell membrane. Receptor for abscisic acid (ABA) required for ABA-mediated responses such as stomatal closure and germination inhibition. Inhibits the activity of group-A protein phosphatases type 2C (PP2Cs) when activated by ABA. Suppresses the phosphatase activity of TOPP1 in a dose-dependent manner in vitro. This chain is Abscisic acid receptor PYL11 (PYL11), found in Arabidopsis thaliana (Mouse-ear cress).